The sequence spans 315 residues: Porphobilinogen deaminase (315 aa).

Cys238 is modified (S-(dipyrrolylmethanemethyl)cysteine).

It belongs to the HMBS family. In terms of assembly, monomer. Requires dipyrromethane as cofactor.

It catalyses the reaction 4 porphobilinogen + H2O = hydroxymethylbilane + 4 NH4(+). Its pathway is porphyrin-containing compound metabolism; protoporphyrin-IX biosynthesis; coproporphyrinogen-III from 5-aminolevulinate: step 2/4. Functionally, tetrapolymerization of the monopyrrole PBG into the hydroxymethylbilane pre-uroporphyrinogen in several discrete steps. This Albidiferax ferrireducens (strain ATCC BAA-621 / DSM 15236 / T118) (Rhodoferax ferrireducens) protein is Porphobilinogen deaminase.